The chain runs to 342 residues: Isopentenyl-diphosphate delta-isomerase (342 aa).

11–12 (RK) provides a ligand contact to substrate. FMN is bound by residues Ser68, 69–71 (SMT), Ser99, and Asn127. 99-101 (SMR) contacts substrate. Gln162 is a binding site for substrate. Mg(2+) is bound at residue Glu163. FMN-binding positions include Lys194, Thr224, 274–276 (GLK), and 295–296 (AG).

This sequence belongs to the IPP isomerase type 2 family. Homooctamer. Dimer of tetramers. FMN serves as cofactor. NADPH is required as a cofactor. The cofactor is Mg(2+).

It localises to the cytoplasm. The enzyme catalyses isopentenyl diphosphate = dimethylallyl diphosphate. Involved in the biosynthesis of isoprenoids. Catalyzes the 1,3-allylic rearrangement of the homoallylic substrate isopentenyl (IPP) to its allylic isomer, dimethylallyl diphosphate (DMAPP). The sequence is that of Isopentenyl-diphosphate delta-isomerase from Rickettsia akari (strain Hartford).